A 200-amino-acid polypeptide reads, in one-letter code: Dephospho-CoA kinase (200 aa).

Positions 4–200 (VIGLTGGIAS…AILKKWNIID (197 aa)) constitute a DPCK domain. Residue 12–17 (ASGKST) participates in ATP binding.

This sequence belongs to the CoaE family.

The protein resides in the cytoplasm. It catalyses the reaction 3'-dephospho-CoA + ATP = ADP + CoA + H(+). Its pathway is cofactor biosynthesis; coenzyme A biosynthesis; CoA from (R)-pantothenate: step 5/5. Functionally, catalyzes the phosphorylation of the 3'-hydroxyl group of dephosphocoenzyme A to form coenzyme A. The sequence is that of Dephospho-CoA kinase from Bacillus thuringiensis subsp. konkukian (strain 97-27).